Reading from the N-terminus, the 158-residue chain is uncharacterized protein (158 aa).

Over residues 1–21 (MPHTGSQHTLQATPKTAQHTG) the composition is skewed to polar residues. 2 disordered regions span residues 1–89 (MPHT…RVEG) and 107–158 (EEEK…DAKT). Composition is skewed to basic and acidic residues over residues 51–68 (HTEG…DKAG) and 107–127 (EEEK…RESR). Residues 128–137 (QGTAHKSTCM) are compositionally biased toward polar residues. Positions 149–158 (EIGKVEDAKT) are enriched in basic and acidic residues.

This is an uncharacterized protein from Encephalitozoon cuniculi (strain GB-M1) (Microsporidian parasite).